Consider the following 101-residue polypeptide: UPF0134 protein MPN_675 (101 aa).

This sequence belongs to the UPF0134 family.

This chain is UPF0134 protein MPN_675, found in Mycoplasma pneumoniae (strain ATCC 29342 / M129 / Subtype 1) (Mycoplasmoides pneumoniae).